Consider the following 844-residue polypeptide: Translation initiation factor IF-2 (844 aa).

Over residues 1-11 (MTEDVKADVPK) the composition is skewed to basic and acidic residues. Disordered regions lie at residues 1–35 (MTED…SKAV) and 79–248 (RLEA…KGAA). A compositionally biased stretch (low complexity) spans 21 to 33 (TTVSGTTTSGKSK). Positions 79 to 161 (RLEAEKAATK…AAEEAKRYAE (83 aa)) are enriched in basic and acidic residues. Residues 162-175 (ADDSDNESSSEDYS) are compositionally biased toward acidic residues. Basic residues predominate over residues 200 to 210 (RGKNKVAKAKK). Basic and acidic residues predominate over residues 211–237 (GGRDDENSKNSKNERESNRKNQKDAKF). Residues 343 to 513 (TRAPVVTIMG…LLQSEVLELT (171 aa)) enclose the tr-type G domain. A G1 region spans residues 352–359 (GHVDHGKT). Residue 352–359 (GHVDHGKT) participates in GTP binding. The interval 377–381 (GITQH) is G2. The interval 399–402 (DTPG) is G3. Residues 399–403 (DTPGH) and 453–456 (NKID) each bind GTP. Positions 453–456 (NKID) are G4. Residues 489–491 (SAK) are G5.

It belongs to the TRAFAC class translation factor GTPase superfamily. Classic translation factor GTPase family. IF-2 subfamily.

It localises to the cytoplasm. Functionally, one of the essential components for the initiation of protein synthesis. Protects formylmethionyl-tRNA from spontaneous hydrolysis and promotes its binding to the 30S ribosomal subunits. Also involved in the hydrolysis of GTP during the formation of the 70S ribosomal complex. The chain is Translation initiation factor IF-2 from Haemophilus influenzae (strain PittGG).